The primary structure comprises 264 residues: Cancer/testis antigen 55 (264 aa).

The disordered stretch occupies residues 242-264; sequence SSSGFQDDGGLGRPKRERRSQSI. Residues 254 to 264 show a composition bias toward basic residues; that stretch reads RPKRERRSQSI.

In terms of assembly, interacts with GABARAP; this interaction may be important for GABARAP protein stability. Isoform 1 interacts with LAMP2; this interaction may be important for LAMP2 protein stability. Testis-specific. Expressed in spermatozoa (at protein level).

It localises to the cytoplasm. It is found in the cytoplasmic vesicle. The protein localises to the secretory vesicle. Its subcellular location is the acrosome. The protein resides in the cell projection. It localises to the cilium. It is found in the flagellum. Its function is as follows. Plays a role in spermatogenesis, possibly acting in the regulation of the autophagy pathway. In Homo sapiens (Human), this protein is Cancer/testis antigen 55 (CT55).